Here is a 449-residue protein sequence, read N- to C-terminus: Serine--tRNA ligase (449 aa).

Residue 255-257 (TSE) participates in L-serine binding. 286-288 (RSE) serves as a coordination point for ATP. Glutamate 309 provides a ligand contact to L-serine. 373 to 376 (EISS) contacts ATP. Serine 409 contacts L-serine.

This sequence belongs to the class-II aminoacyl-tRNA synthetase family. Type-1 seryl-tRNA synthetase subfamily. In terms of assembly, homodimer. The tRNA molecule binds across the dimer.

It localises to the cytoplasm. It catalyses the reaction tRNA(Ser) + L-serine + ATP = L-seryl-tRNA(Ser) + AMP + diphosphate + H(+). The enzyme catalyses tRNA(Sec) + L-serine + ATP = L-seryl-tRNA(Sec) + AMP + diphosphate + H(+). Its pathway is aminoacyl-tRNA biosynthesis; selenocysteinyl-tRNA(Sec) biosynthesis; L-seryl-tRNA(Sec) from L-serine and tRNA(Sec): step 1/1. In terms of biological role, catalyzes the attachment of serine to tRNA(Ser). Is also able to aminoacylate tRNA(Sec) with serine, to form the misacylated tRNA L-seryl-tRNA(Sec), which will be further converted into selenocysteinyl-tRNA(Sec). This is Serine--tRNA ligase from Bordetella avium (strain 197N).